The primary structure comprises 509 residues: Mitogen-activated protein kinase sma-5 (509 aa).

Positions aspartate 19–serine 72 are disordered. 2 stretches are compositionally biased toward polar residues: residues proline 20–asparagine 30 and asparagine 40–serine 54. The Protein kinase domain occupies tyrosine 105–isoleucine 411. ATP contacts are provided by residues isoleucine 111 to valine 119 and lysine 134. The Proton acceptor role is filled by aspartate 231. Positions tyrosine 460 to glutamate 482 are disordered. Low complexity predominate over residues glycine 466–glycine 481.

This sequence belongs to the protein kinase superfamily. CMGC Ser/Thr protein kinase family. MAP kinase subfamily. It depends on Mg(2+) as a cofactor. As to expression, expressed in intestine with a stronger expression in the four most anterior cells, muscles, excretory cell, pharynx and, to a lesser extent, in hypodermis.

It catalyses the reaction L-seryl-[protein] + ATP = O-phospho-L-seryl-[protein] + ADP + H(+). The enzyme catalyses L-threonyl-[protein] + ATP = O-phospho-L-threonyl-[protein] + ADP + H(+). In terms of biological role, serine/threonine-protein kinase involved in the postembryonic regulation of body size, mainly through control of cell growth. In particular, controls the volume of intestine, muscles and hypodermis. In addition, regulates growth, intestinal granule distribution, lifespan and number of offspring. The chain is Mitogen-activated protein kinase sma-5 from Caenorhabditis elegans.